Consider the following 446-residue polypeptide: MGGFTGQSEVSVSQGIRMMFYVLYPNETSFKNVEDVPDYVEKATVYFFIMLILEMIISWAWKGQPLRINDGLTSLSAGVFSRLPDVAFRGVEVASYIYIWNNYRLIELPWDSPWTWWLTFLGVDFGYYWFHRMAHEVNIMWAGHQTHHSSEDYNLTTALRQSFIQKYFSWMFYWPMAFCIPPSVFAVHIQFNLLYQFWIHTELINNLGPLEWILNTPSHHRVHHGRNPYCIDSNYAGTLIIWDRMFGTFVPEKEKVLYGLTHPINTFEPFQVQIQHCVLIWNTFWATPGFSNKLSVIFKGPGWGPGKPRLGLPEEIPQITGEEKPYDPKSAGYLQCYGMMHFLLLLAVYVHMFEAKLILTPATLLLRIGYILLTLTSLGFIFDKRPKAALLETIRCLLFLFLQKYDYMTTDVPYLRIINEVTFSICTAAWGLKAVKEAIERTKKLE.

2 consecutive transmembrane segments (helical) span residues 43–63 (ATVYFFIMLILEMIISWAWKG) and 110–130 (WDSPWTWWLTFLGVDFGYYWF). Residues 118–248 (LTFLGVDFGY…LIIWDRMFGT (131 aa)) form the Fatty acid hydroxylase domain. Residues 131–135 (HRMAH) carry the Histidine box-1 motif. Residues 144–148 (HQTHH) carry the Histidine box-2 motif. The chain crosses the membrane as a helical span at residues 167 to 187 (YFSWMFYWPMAFCIPPSVFAV). A Histidine box-3 motif is present at residues 220 to 224 (HRVHH). 3 helical membrane-spanning segments follow: residues 339 to 359 (MMHFLLLLAVYVHMFEAKLIL), 362 to 382 (ATLLLRIGYILLTLTSLGFIF), and 412 to 434 (VPYLRIINEVTFSICTAAWGLKA).

This sequence belongs to the sterol desaturase family. TMEM195 subfamily. Requires Fe cation as cofactor.

It is found in the endoplasmic reticulum membrane. It catalyses the reaction 1-O-(1,2-saturated-alkyl)-sn-glycerol + (6R)-L-erythro-5,6,7,8-tetrahydrobiopterin + O2 = a 1-(1-hydroxyalkyl)-sn-glycerol + (6R)-L-erythro-6,7-dihydrobiopterin + H2O. Functionally, glyceryl-ether monooxygenase that cleaves the O-alkyl bond of ether lipids. Ether lipids are essential components of brain membranes. The polypeptide is Alkylglycerol monooxygenase (agmo) (Xenopus tropicalis (Western clawed frog)).